The sequence spans 415 residues: Coiled-coil domain-containing glutamate-rich protein 1 (415 aa).

The span at 1-11 (MTQTLDTKEDP) shows a compositional bias: basic and acidic residues. Disordered regions lie at residues 1 to 20 (MTQTLDTKEDPLNLGGGWAS), 29 to 64 (FGPRRRRGAPVYRRRPRYGPKAEYEPPRKQAKQQYG), 133 to 162 (RPPGRKKRWGRRGRGLRRHPRRSAQRSPPV), 202 to 241 (QEKLERQQEALRAQQAQAASTASPEGAFGNDVPPSGGQED), and 255 to 372 (PSLV…PLEM). Basic residues-rich tracts occupy residues 31–46 (PRRRRGAPVYRRRPRY) and 135–156 (PGRKKRWGRRGRGLRRHPRRSA). 2 coiled-coil regions span residues 197-224 (EDMRQQEKLERQQEALRAQQAQAASTAS) and 264-366 (DEEK…EEEN). Residues 211-220 (ALRAQQAQAA) are compositionally biased toward low complexity. A compositionally biased stretch (acidic residues) spans 275–363 (VEEEEEGERE…EGLAEDEQTE (89 aa)).

It is found in the nucleus. Its function is as follows. Regulator of histone epigenetic modifications and chromatin compaction into the sperm head, required for histone-to-protamine (HTP) transition. HTP is a key event in which somatic histones are first replaced by testis-specific histone variants, then transition proteins (TNPs) are incorporated into the spermatid nucleus, and finally protamines (PRMs) replace the TNPs to promote chromatin condensation. This is Coiled-coil domain-containing glutamate-rich protein 1 (CCER1) from Bos taurus (Bovine).